The sequence spans 608 residues: Chaperone protein DnaK (608 aa).

Thr174 carries the post-translational modification Phosphothreonine; by autocatalysis. Residues 493–505 (YEEEDRKRKESAE) show a composition bias toward basic and acidic residues. Disordered stretches follow at residues 493-514 (YEEEDRKRKESAETRNNADSMV) and 577-608 (GQAAGANPGAQTTGGEQGNVYDAEYKVVDDDK). The segment covering 577–590 (GQAAGANPGAQTTG) has biased composition (low complexity). Residues 599–608 (AEYKVVDDDK) are compositionally biased toward basic and acidic residues.

This sequence belongs to the heat shock protein 70 family.

Acts as a chaperone. The chain is Chaperone protein DnaK from Acetivibrio thermocellus (strain ATCC 27405 / DSM 1237 / JCM 9322 / NBRC 103400 / NCIMB 10682 / NRRL B-4536 / VPI 7372) (Clostridium thermocellum).